Consider the following 162-residue polypeptide: Eukaryotic translation initiation factor 5 (162 aa).

Residues 59 to 162 form a disordered region; that stretch reads PPNLNPAVQG…EKDRMDIFYE (104 aa). Residues 85–109 show a composition bias toward polar residues; sequence GDTNGDTSQVDDQNESLEASVNENS. Residues 148–162 show a composition bias toward basic and acidic residues; that stretch reads DLEKREKDRMDIFYE.

It belongs to the eIF-2-beta/eIF-5 family.

Its function is as follows. Catalyzes the hydrolysis of GTP bound to the 40S ribosomal initiation complex (40S.mRNA.Met-tRNA[F].eIF-2.GTP) with the subsequent joining of a 60S ribosomal subunit resulting in the release of eIF-2 and the guanine nucleotide. The subsequent joining of a 60S ribosomal subunit results in the formation of a functional 80S initiation complex (80S.mRNA.Met-tRNA[F]). The chain is Eukaryotic translation initiation factor 5 from Tribolium castaneum (Red flour beetle).